We begin with the raw amino-acid sequence, 119 residues long: Large ribosomal subunit protein bL20 (119 aa).

This sequence belongs to the bacterial ribosomal protein bL20 family.

In terms of biological role, binds directly to 23S ribosomal RNA and is necessary for the in vitro assembly process of the 50S ribosomal subunit. It is not involved in the protein synthesizing functions of that subunit. In Bradyrhizobium sp. (strain ORS 278), this protein is Large ribosomal subunit protein bL20.